Reading from the N-terminus, the 217-residue chain is FMN-dependent NADH:quinone oxidoreductase (217 aa).

Residues serine 10 and serine 16–serine 18 each bind FMN.

This sequence belongs to the azoreductase type 1 family. As to quaternary structure, homodimer. FMN is required as a cofactor.

It catalyses the reaction 2 a quinone + NADH + H(+) = 2 a 1,4-benzosemiquinone + NAD(+). It carries out the reaction N,N-dimethyl-1,4-phenylenediamine + anthranilate + 2 NAD(+) = 2-(4-dimethylaminophenyl)diazenylbenzoate + 2 NADH + 2 H(+). Quinone reductase that provides resistance to thiol-specific stress caused by electrophilic quinones. In terms of biological role, also exhibits azoreductase activity. Catalyzes the reductive cleavage of the azo bond in aromatic azo compounds to the corresponding amines. The polypeptide is FMN-dependent NADH:quinone oxidoreductase (Polaromonas naphthalenivorans (strain CJ2)).